The following is a 138-amino-acid chain: uncharacterized protein (138 aa).

It belongs to the IIV-3 015R family.

This is an uncharacterized protein from Simulium iridescent virus (IIV-22).